Reading from the N-terminus, the 654-residue chain is Chaperone protein DnaK (654 aa).

Thr-205 bears the Phosphothreonine; by autocatalysis mark. The disordered stretch occupies residues 592-654 (ELERQMQQIG…EVEILDDKKP (63 aa)). Residues 608–621 (AGQSETQSTGPGSY) are compositionally biased toward polar residues. The span at 622–636 (QESSNQSSQHQTNNN) shows a compositional bias: low complexity.

The protein belongs to the heat shock protein 70 family.

In terms of biological role, acts as a chaperone. The polypeptide is Chaperone protein DnaK (Protochlamydia amoebophila (strain UWE25)).